A 133-amino-acid polypeptide reads, in one-letter code: uncharacterized protein (133 aa).

The segment at 107–133 is disordered; sequence TSHHRAAGLQSQHAPGSGRVRITGGKV.

This is an uncharacterized protein from Homo sapiens (Human).